A 154-amino-acid polypeptide reads, in one-letter code: MGLSDGEWQIVLNIWGKVETDLAGHGQEVLIRLFKNHPETLDKFDKFKHLKTEDEMKGSEDLKKHGNTVLTALGGILKKKGHHEAELKPLAQSHATKHKIPVKYLEFISDAIIQVLQNKHSGDFHADTEAAMKKALELFRNDIAAKYKELGFQG.

The Globin domain maps to 2-148 (GLSDGEWQIV…FRNDIAAKYK (147 aa)). Serine 4 carries the post-translational modification Phosphoserine. Position 65 (histidine 65) interacts with nitrite. Histidine 65 is a binding site for O2. A Phosphothreonine modification is found at threonine 68. A heme b-binding site is contributed by histidine 94.

Belongs to the globin family. Monomeric.

The protein localises to the cytoplasm. Its subcellular location is the sarcoplasm. The enzyme catalyses Fe(III)-heme b-[protein] + nitric oxide + H2O = Fe(II)-heme b-[protein] + nitrite + 2 H(+). It carries out the reaction H2O2 + AH2 = A + 2 H2O. Its function is as follows. Monomeric heme protein which primary function is to store oxygen and facilitate its diffusion within muscle tissues. Reversibly binds oxygen through a pentacoordinated heme iron and enables its timely and efficient release as needed during periods of heightened demand. Depending on the oxidative conditions of tissues and cells, and in addition to its ability to bind oxygen, it also has a nitrite reductase activity whereby it regulates the production of bioactive nitric oxide. Under stress conditions, like hypoxia and anoxia, it also protects cells against reactive oxygen species thanks to its pseudoperoxidase activity. The chain is Myoglobin (MB) from Lycaon pictus (African wild dog).